A 286-amino-acid polypeptide reads, in one-letter code: Prohibitin-2, mitochondrial (286 aa).

Residues 1 to 13 (MSFNKVPNIPGAP) are Mitochondrial matrix-facing. The chain crosses the membrane as a helical; Signal-anchor for type II membrane protein span at residues 14–32 (ALSALLKVSVIGGLGVYAL). The Mitochondrial intermembrane segment spans residues 33 to 286 (TNSLYNVDGG…LQEMNLEPKK (254 aa)). Residues 186–219 (KEFTAAIEAKQVAAQEAERAKFIVEKAEQDRRSA) adopt a coiled-coil conformation.

Belongs to the prohibitin family. As to quaternary structure, component of a prohibitin multimeric complex in mitochondrial membranes. As to expression, mostly expressed in proliferative tissues, including vasculature, shoot and root apical tissues.

Its subcellular location is the mitochondrion inner membrane. Prohibitin probably acts as a holdase/unfoldase for the stabilization of newly synthesized mitochondrial proteins. The polypeptide is Prohibitin-2, mitochondrial (PHB2) (Arabidopsis thaliana (Mouse-ear cress)).